Consider the following 75-residue polypeptide: Theromacin (75 aa).

Disulfide bonds link C2–C9, C24–C28, C31–C73, C39–C47, and C57–C59.

This sequence belongs to the macin family.

It localises to the secreted. Functionally, has a bactericial activity. In Hirudo medicinalis (Medicinal leech), this protein is Theromacin.